The sequence spans 259 residues: HTH-type quorum sensing-dependent transcriptional regulator VjbR (259 aa).

The interval 76 to 179 (KNYFAIDPVF…AGIIHGTVCG (104 aa)) is C12-HSL binding. One can recognise an HTH luxR-type domain in the interval 183–248 (ANSVASLLTP…SAVATALSLG (66 aa)). Residues 207–226 (DGEIAEILSIARWTVVTYLQ) constitute a DNA-binding region (H-T-H motif).

Functionally, transcriptional regulator involved in the global control of Brucella gene expression. Mediates the effects of the quorum sensing autoinducer C12-HSL (N-dodecanoyl-homoserine lactone) on a large and diverse number of genes. This is HTH-type quorum sensing-dependent transcriptional regulator VjbR (vjbR) from Brucella ovis (strain ATCC 25840 / 63/290 / NCTC 10512).